A 222-amino-acid chain; its full sequence is Interleukin-12 subunit alpha (222 aa).

Residues 1–25 (MCPPRGLLLVTILVLLNHLDHLSLA) form the signal peptide. Intrachain disulfides connect Cys-40–Cys-113, Cys-67–Cys-199, and Cys-88–Cys-126. Asn-42, Asn-96, Asn-110, and Asn-183 each carry an N-linked (GlcNAc...) asparagine glycan.

This sequence belongs to the IL-6 superfamily. As to quaternary structure, heterodimer with IL12B; disulfide-linked. This heterodimer is known as interleukin IL-12. Heterodimer with EBI3/IL27B; not disulfide-linked. This heterodimer is known as interleukin IL-35. Interacts with NBR1; this interaction promotes IL-12 secretion.

It is found in the secreted. In terms of biological role, heterodimerizes with IL12B to form the IL-12 cytokine or with EBI3/IL27B to form the IL-35 cytokine. IL-12 is primarily produced by professional antigen-presenting cells (APCs) such as B-cells and dendritic cells (DCs) as well as macrophages and granulocytes and regulates T-cell and natural killer-cell responses, induces the production of interferon-gamma (IFN-gamma), favors the differentiation of T-helper 1 (Th1) cells and is an important link between innate resistance and adaptive immunity. Mechanistically, exerts its biological effects through a receptor composed of IL12R1 and IL12R2 subunits. Binding to the receptor results in the rapid tyrosine phosphorylation of a number of cellular substrates including the JAK family kinases TYK2 and JAK2. In turn, recruited STAT4 gets phosphorylated and translocates to the nucleus where it regulates cytokine/growth factor responsive genes. As part of IL-35, plays essential roles in maintaining the immune homeostasis of the liver microenvironment and also functions as an immune-suppressive cytokine. Mediates biological events through unconventional receptors composed of IL12RB2 and gp130/IL6ST heterodimers or homodimers. Signaling requires the transcription factors STAT1 and STAT4, which form a unique heterodimer that binds to distinct DNA sites. This Felis catus (Cat) protein is Interleukin-12 subunit alpha (IL12A).